Here is a 285-residue protein sequence, read N- to C-terminus: NAD kinase (285 aa).

Aspartate 76 serves as the catalytic Proton acceptor. NAD(+) is bound by residues 76–77, 151–152, histidine 162, arginine 179, aspartate 181, 192–197, and glutamine 252; these read DG, NE, and TAYSLS.

The protein belongs to the NAD kinase family. The cofactor is a divalent metal cation.

Its subcellular location is the cytoplasm. The catalysed reaction is NAD(+) + ATP = ADP + NADP(+) + H(+). Involved in the regulation of the intracellular balance of NAD and NADP, and is a key enzyme in the biosynthesis of NADP. Catalyzes specifically the phosphorylation on 2'-hydroxyl of the adenosine moiety of NAD to yield NADP. The sequence is that of NAD kinase from Haemophilus influenzae (strain ATCC 51907 / DSM 11121 / KW20 / Rd).